The primary structure comprises 245 residues: U11/U12 small nuclear ribonucleoprotein 35 kDa protein (245 aa).

Positions 51–129 (LTLFVARLNL…HEIFVDYELE (79 aa)) constitute an RRM domain. The span at 146–162 (GKKESGQLRFGGRDRPF) shows a compositional bias: basic and acidic residues. Positions 146-165 (GKKESGQLRFGGRDRPFRKP) are disordered. K172 participates in a covalent cross-link: Glycyl lysine isopeptide (Lys-Gly) (interchain with G-Cter in SUMO2). A disordered region spans residues 173-222 (NDQFREGKRERRERSRSRERHWDSRMRDHHDRGREKRWQEREPARAWPEG). Composition is skewed to basic and acidic residues over residues 174–185 (DQFREGKRERRE) and 192–216 (RHWDSRMRDHHDRGREKRWQEREPA).

Component of the U11/U12 snRNPs that are part of the U12-type spliceosome.

The protein localises to the nucleus. In Bos taurus (Bovine), this protein is U11/U12 small nuclear ribonucleoprotein 35 kDa protein (SNRNP35).